The chain runs to 692 residues: Methionine--tRNA ligase (692 aa).

The 'HIGH' region motif lies at 12–22; sequence PYANGSFHIGH. C143, C146, C156, and C159 together coordinate Zn(2+). Positions 341-345 match the 'KMSKS' region motif; that stretch reads KMSKS. K344 contacts ATP. The 107-residue stretch at 586–692 folds into the tRNA-binding domain; that stretch reads DFAKIDLRIA…PGAQPGMRVR (107 aa).

The protein belongs to the class-I aminoacyl-tRNA synthetase family. MetG type 1 subfamily. Homodimer. Zn(2+) serves as cofactor.

It is found in the cytoplasm. The enzyme catalyses tRNA(Met) + L-methionine + ATP = L-methionyl-tRNA(Met) + AMP + diphosphate. Is required not only for elongation of protein synthesis but also for the initiation of all mRNA translation through initiator tRNA(fMet) aminoacylation. The sequence is that of Methionine--tRNA ligase from Bordetella bronchiseptica (strain ATCC BAA-588 / NCTC 13252 / RB50) (Alcaligenes bronchisepticus).